The sequence spans 340 residues: HPr kinase/phosphorylase (340 aa).

Catalysis depends on residues histidine 153 and lysine 174. Residue 168-175 coordinates ATP; that stretch reads GNSGLGKS. Residue serine 175 participates in Mg(2+) binding. Residue aspartate 192 is the Proton acceptor; for phosphorylation activity. Proton donor; for dephosphorylation activity of the active site. The segment at 216–225 is important for the catalytic mechanism of both phosphorylation and dephosphorylation; it reads MEIRGLGVVD. Glutamate 217 provides a ligand contact to Mg(2+). Arginine 258 is an active-site residue. Residues 279–284 are important for the catalytic mechanism of dephosphorylation; that stretch reads PINPGK.

Belongs to the HPrK/P family. In terms of assembly, homohexamer. It depends on Mg(2+) as a cofactor.

It carries out the reaction [HPr protein]-L-serine + ATP = [HPr protein]-O-phospho-L-serine + ADP + H(+). It catalyses the reaction [HPr protein]-O-phospho-L-serine + phosphate + H(+) = [HPr protein]-L-serine + diphosphate. Catalyzes the ATP- as well as the pyrophosphate-dependent phosphorylation of a specific serine residue in HPr, a phosphocarrier protein of the phosphoenolpyruvate-dependent sugar phosphotransferase system (PTS). HprK/P also catalyzes the pyrophosphate-producing, inorganic phosphate-dependent dephosphorylation (phosphorolysis) of seryl-phosphorylated HPr (P-Ser-HPr). The chain is HPr kinase/phosphorylase from Prosthecochloris aestuarii (strain DSM 271 / SK 413).